The chain runs to 256 residues: Type III pantothenate kinase (256 aa).

Asp6 to Val13 lines the ATP pocket. Residue Gly107–Arg110 coordinates substrate. Asp109 functions as the Proton acceptor in the catalytic mechanism. Residue Asp129 participates in K(+) binding. Thr132 contributes to the ATP binding site. Thr184 is a substrate binding site.

Belongs to the type III pantothenate kinase family. Homodimer. It depends on NH4(+) as a cofactor. K(+) is required as a cofactor.

It localises to the cytoplasm. The enzyme catalyses (R)-pantothenate + ATP = (R)-4'-phosphopantothenate + ADP + H(+). It participates in cofactor biosynthesis; coenzyme A biosynthesis; CoA from (R)-pantothenate: step 1/5. In terms of biological role, catalyzes the phosphorylation of pantothenate (Pan), the first step in CoA biosynthesis. The protein is Type III pantothenate kinase of Dinoroseobacter shibae (strain DSM 16493 / NCIMB 14021 / DFL 12).